We begin with the raw amino-acid sequence, 260 residues long: Indole-3-glycerol phosphate synthase (260 aa).

It belongs to the TrpC family.

It carries out the reaction 1-(2-carboxyphenylamino)-1-deoxy-D-ribulose 5-phosphate + H(+) = (1S,2R)-1-C-(indol-3-yl)glycerol 3-phosphate + CO2 + H2O. The protein operates within amino-acid biosynthesis; L-tryptophan biosynthesis; L-tryptophan from chorismate: step 4/5. The protein is Indole-3-glycerol phosphate synthase of Nocardioides sp. (strain ATCC BAA-499 / JS614).